The chain runs to 277 residues: Diaminopimelate epimerase (277 aa).

The substrate site is built by Asn-17, Gln-50, and Asn-68. Cys-77 serves as the catalytic Proton donor. Substrate-binding positions include 78–79 (GN), Asn-162, Asn-195, and 213–214 (ER). The active-site Proton acceptor is Cys-222. Position 223 to 224 (223 to 224 (GT)) interacts with substrate.

The protein belongs to the diaminopimelate epimerase family. As to quaternary structure, homodimer.

Its subcellular location is the cytoplasm. The enzyme catalyses (2S,6S)-2,6-diaminopimelate = meso-2,6-diaminopimelate. It functions in the pathway amino-acid biosynthesis; L-lysine biosynthesis via DAP pathway; DL-2,6-diaminopimelate from LL-2,6-diaminopimelate: step 1/1. Catalyzes the stereoinversion of LL-2,6-diaminopimelate (L,L-DAP) to meso-diaminopimelate (meso-DAP), a precursor of L-lysine and an essential component of the bacterial peptidoglycan. The protein is Diaminopimelate epimerase of Phenylobacterium zucineum (strain HLK1).